Consider the following 201-residue polypeptide: Imidazole glycerol phosphate synthase subunit HisH (201 aa).

The Glutamine amidotransferase type-1 domain maps to 1–201; that stretch reads MIIVIDYDAG…ILKKFVDLCD (201 aa). The Nucleophile role is filled by Cys-79. Active-site residues include His-181 and Glu-183.

Heterodimer of HisH and HisF.

It localises to the cytoplasm. It carries out the reaction 5-[(5-phospho-1-deoxy-D-ribulos-1-ylimino)methylamino]-1-(5-phospho-beta-D-ribosyl)imidazole-4-carboxamide + L-glutamine = D-erythro-1-(imidazol-4-yl)glycerol 3-phosphate + 5-amino-1-(5-phospho-beta-D-ribosyl)imidazole-4-carboxamide + L-glutamate + H(+). It catalyses the reaction L-glutamine + H2O = L-glutamate + NH4(+). It participates in amino-acid biosynthesis; L-histidine biosynthesis; L-histidine from 5-phospho-alpha-D-ribose 1-diphosphate: step 5/9. Functionally, IGPS catalyzes the conversion of PRFAR and glutamine to IGP, AICAR and glutamate. The HisH subunit catalyzes the hydrolysis of glutamine to glutamate and ammonia as part of the synthesis of IGP and AICAR. The resulting ammonia molecule is channeled to the active site of HisF. The sequence is that of Imidazole glycerol phosphate synthase subunit HisH from Streptococcus mutans serotype c (strain ATCC 700610 / UA159).